The following is a 461-amino-acid chain: UDP-N-acetylmuramoylalanine--D-glutamate ligase (461 aa).

123–129 is an ATP binding site; that stretch reads GTNGKTT.

Belongs to the MurCDEF family.

Its subcellular location is the cytoplasm. It catalyses the reaction UDP-N-acetyl-alpha-D-muramoyl-L-alanine + D-glutamate + ATP = UDP-N-acetyl-alpha-D-muramoyl-L-alanyl-D-glutamate + ADP + phosphate + H(+). It participates in cell wall biogenesis; peptidoglycan biosynthesis. In terms of biological role, cell wall formation. Catalyzes the addition of glutamate to the nucleotide precursor UDP-N-acetylmuramoyl-L-alanine (UMA). This chain is UDP-N-acetylmuramoylalanine--D-glutamate ligase, found in Natranaerobius thermophilus (strain ATCC BAA-1301 / DSM 18059 / JW/NM-WN-LF).